The primary structure comprises 352 residues: N-acetyl-gamma-glutamyl-phosphate reductase (352 aa).

Cysteine 156 is a catalytic residue.

It belongs to the NAGSA dehydrogenase family. Type 1 subfamily.

The protein resides in the cytoplasm. It catalyses the reaction N-acetyl-L-glutamate 5-semialdehyde + phosphate + NADP(+) = N-acetyl-L-glutamyl 5-phosphate + NADPH + H(+). The protein operates within amino-acid biosynthesis; L-arginine biosynthesis; N(2)-acetyl-L-ornithine from L-glutamate: step 3/4. In terms of biological role, catalyzes the NADPH-dependent reduction of N-acetyl-5-glutamyl phosphate to yield N-acetyl-L-glutamate 5-semialdehyde. This chain is N-acetyl-gamma-glutamyl-phosphate reductase, found in Afipia carboxidovorans (strain ATCC 49405 / DSM 1227 / KCTC 32145 / OM5) (Oligotropha carboxidovorans).